Reading from the N-terminus, the 649-residue chain is 1-deoxy-D-xylulose-5-phosphate synthase (649 aa).

Thiamine diphosphate is bound by residues His74 and 115–117; that span reads GHA. Asp146 is a Mg(2+) binding site. Thiamine diphosphate-binding positions include 147–148, Asn176, Tyr292, and Glu375; that span reads GA. Asn176 is a Mg(2+) binding site.

The protein belongs to the transketolase family. DXPS subfamily. As to quaternary structure, homodimer. The cofactor is Mg(2+). Requires thiamine diphosphate as cofactor.

It carries out the reaction D-glyceraldehyde 3-phosphate + pyruvate + H(+) = 1-deoxy-D-xylulose 5-phosphate + CO2. It functions in the pathway metabolic intermediate biosynthesis; 1-deoxy-D-xylulose 5-phosphate biosynthesis; 1-deoxy-D-xylulose 5-phosphate from D-glyceraldehyde 3-phosphate and pyruvate: step 1/1. Functionally, catalyzes the acyloin condensation reaction between C atoms 2 and 3 of pyruvate and glyceraldehyde 3-phosphate to yield 1-deoxy-D-xylulose-5-phosphate (DXP). This is 1-deoxy-D-xylulose-5-phosphate synthase from Synechococcus sp. (strain JA-3-3Ab) (Cyanobacteria bacterium Yellowstone A-Prime).